The sequence spans 412 residues: [Pyruvate dehydrogenase (acetyl-transferring)] kinase isozyme 4, mitochondrial (412 aa).

The Histidine kinase domain occupies 138–368 (ILEYKDTCTV…DAIIYLKALS (231 aa)). ATP contacts are provided by residues 254 to 261 (ELFKNAMR), Asp293, 312 to 313 (ST), and 329 to 334 (GFGYGL).

Belongs to the PDK/BCKDK protein kinase family. In terms of assembly, homodimer. Interacts with the pyruvate dehydrogenase complex subunit DLAT, and is part of the multimeric pyruvate dehydrogenase complex that contains multiple copies of pyruvate dehydrogenase (E1), dihydrolipoamide acetyltransferase (DLAT, E2) and lipoamide dehydrogenase (DLD, E3). As to expression, detected in skeletal muscle and heart.

Its subcellular location is the mitochondrion matrix. The catalysed reaction is L-seryl-[pyruvate dehydrogenase E1 alpha subunit] + ATP = O-phospho-L-seryl-[pyruvate dehydrogenase E1 alpha subunit] + ADP + H(+). Kinase that plays a key role in regulation of glucose and fatty acid metabolism and homeostasis via phosphorylation of the pyruvate dehydrogenase subunits PDHA1 and PDHA2. This inhibits pyruvate dehydrogenase activity, and thereby regulates metabolite flux through the tricarboxylic acid cycle, down-regulates aerobic respiration and inhibits the formation of acetyl-coenzyme A from pyruvate. Inhibition of pyruvate dehydrogenase decreases glucose utilization and increases fat metabolism in response to prolonged fasting and starvation. Plays an important role in maintaining normal blood glucose levels under starvation, and is involved in the insulin signaling cascade. Via its regulation of pyruvate dehydrogenase activity, plays an important role in maintaining normal blood pH and in preventing the accumulation of ketone bodies under starvation. In the fed state, mediates cellular responses to glucose levels and to a high-fat diet. Regulates both fatty acid oxidation and de novo fatty acid biosynthesis. Plays a role in the generation of reactive oxygen species. Protects detached epithelial cells against anoikis. Plays a role in cell proliferation via its role in regulating carbohydrate and fatty acid metabolism. This Ictidomys tridecemlineatus (Thirteen-lined ground squirrel) protein is [Pyruvate dehydrogenase (acetyl-transferring)] kinase isozyme 4, mitochondrial (PDK4).